The primary structure comprises 889 residues: Cytoplasmic aconitate hydratase (889 aa).

Substrate contacts are provided by residues Gln86 and 205 to 207 (DSH). [4Fe-4S] cluster contacts are provided by Cys437, Cys503, and Cys506. Substrate-binding positions include Arg536, Arg541, Arg699, and 779–780 (SR).

Belongs to the aconitase/IPM isomerase family. [4Fe-4S] cluster is required as a cofactor.

The protein localises to the cytoplasm. It localises to the cytosol. The catalysed reaction is citrate = D-threo-isocitrate. Bifunctional iron sensor that switches between 2 activities depending on iron availability. Iron deprivation, promotes its mRNA binding activity through which it regulates the expression of genes involved in iron uptake, sequestration and utilization. Binds to iron-responsive elements (IRES) in the untranslated region of target mRNAs preventing for instance the translation of ferritin and aminolevulinic acid synthase and stabilizing the transferrin receptor mRNA. In terms of biological role, conversely, when cellular iron levels are high, binds a 4Fe-4S cluster which precludes RNA binding activity and promotes the aconitase activity, the isomerization of citrate to isocitrate via cis-aconitate. The polypeptide is Cytoplasmic aconitate hydratase (ACO1) (Gallus gallus (Chicken)).